We begin with the raw amino-acid sequence, 116 residues long: Large ribosomal subunit protein uL18 (116 aa).

This sequence belongs to the universal ribosomal protein uL18 family. As to quaternary structure, part of the 50S ribosomal subunit; part of the 5S rRNA/L5/L18/L25 subcomplex. Contacts the 5S and 23S rRNAs.

This is one of the proteins that bind and probably mediate the attachment of the 5S RNA into the large ribosomal subunit, where it forms part of the central protuberance. In Shewanella sediminis (strain HAW-EB3), this protein is Large ribosomal subunit protein uL18.